Reading from the N-terminus, the 191-residue chain is FAD-linked sulfhydryl oxidase ERV1 (191 aa).

One can recognise an ERV/ALR sulfhydryl oxidase domain in the interval Gly72–Trp172. Lys76, Arg81, Trp84, Glu121, His125, Cys148, His151, Asn152, Asn155, Lys160, and Arg171 together coordinate FAD. A disulfide bridge connects residues Cys119 and Cys122. The cysteines at positions 148 and 165 are disulfide-linked. A disulfide bridge connects residues Cys177 and Cys182. A Required for dimerization and substrate specificity motif is present at residues Cys177–Cys182.

In terms of assembly, homodimer. FAD is required as a cofactor. Post-translationally, contains three disulfide bonds; one catalytic disulfide (Cys-119 to Cys-122), one structural disulfide (Cys-148 to Cys-165), and one shuttle disulfide (Cys-177 to Cys-182).

Its subcellular location is the mitochondrion. It catalyses the reaction 2 R'C(R)SH + O2 = R'C(R)S-S(R)CR' + H2O2. In terms of biological role, FAD-dependent sulfhydryl oxidase that catalyzes disulfide bond formation. Oxidizes thioredoxin in vitro. Required for the import and folding of small cysteine-containing proteins in the mitochondrial intermembrane space, and can act independently of the oxidoreductase MIA40. Can oxidize the cytochrome c oxidase assembly protein COX19, a typical substrate of MIA40. In Arabidopsis thaliana (Mouse-ear cress), this protein is FAD-linked sulfhydryl oxidase ERV1 (ERV1).